We begin with the raw amino-acid sequence, 610 residues long: Dihydroxy-acid dehydratase (610 aa).

Position 81 (Asp-81) interacts with Mg(2+). Cys-122 serves as a coordination point for [2Fe-2S] cluster. Asp-123 and Lys-124 together coordinate Mg(2+). Lys-124 is modified (N6-carboxylysine). Cys-193 contributes to the [2Fe-2S] cluster binding site. Glu-489 provides a ligand contact to Mg(2+). Ser-515 acts as the Proton acceptor in catalysis.

Belongs to the IlvD/Edd family. Homodimer. It depends on [2Fe-2S] cluster as a cofactor. Requires Mg(2+) as cofactor.

The enzyme catalyses (2R)-2,3-dihydroxy-3-methylbutanoate = 3-methyl-2-oxobutanoate + H2O. The catalysed reaction is (2R,3R)-2,3-dihydroxy-3-methylpentanoate = (S)-3-methyl-2-oxopentanoate + H2O. The protein operates within amino-acid biosynthesis; L-isoleucine biosynthesis; L-isoleucine from 2-oxobutanoate: step 3/4. It functions in the pathway amino-acid biosynthesis; L-valine biosynthesis; L-valine from pyruvate: step 3/4. In terms of biological role, functions in the biosynthesis of branched-chain amino acids. Catalyzes the dehydration of (2R,3R)-2,3-dihydroxy-3-methylpentanoate (2,3-dihydroxy-3-methylvalerate) into 2-oxo-3-methylpentanoate (2-oxo-3-methylvalerate) and of (2R)-2,3-dihydroxy-3-methylbutanoate (2,3-dihydroxyisovalerate) into 2-oxo-3-methylbutanoate (2-oxoisovalerate), the penultimate precursor to L-isoleucine and L-valine, respectively. This Xylella fastidiosa (strain 9a5c) protein is Dihydroxy-acid dehydratase.